A 764-amino-acid polypeptide reads, in one-letter code: 5-methyltetrahydropteroyltriglutamate--homocysteine methyltransferase (764 aa).

5-methyltetrahydropteroyltri-L-glutamate is bound by residues 16-19 and K121; that span reads RELK. L-homocysteine-binding positions include 440 to 442 and E493; that span reads IGS. L-methionine is bound by residues 440 to 442 and E493; that span reads IGS. 5-methyltetrahydropteroyltri-L-glutamate is bound by residues 524-525 and W570; that span reads RC. D608 contacts L-homocysteine. D608 contributes to the L-methionine binding site. Residue E614 coordinates 5-methyltetrahydropteroyltri-L-glutamate. Positions 650, 652, and 674 each coordinate Zn(2+). The active-site Proton donor is the H703. Position 735 (C735) interacts with Zn(2+).

It belongs to the vitamin-B12 independent methionine synthase family. Zn(2+) serves as cofactor.

It catalyses the reaction 5-methyltetrahydropteroyltri-L-glutamate + L-homocysteine = tetrahydropteroyltri-L-glutamate + L-methionine. The protein operates within amino-acid biosynthesis; L-methionine biosynthesis via de novo pathway; L-methionine from L-homocysteine (MetE route): step 1/1. Catalyzes the transfer of a methyl group from 5-methyltetrahydrofolate to homocysteine resulting in methionine formation. This Burkholderia cenocepacia (strain ATCC BAA-245 / DSM 16553 / LMG 16656 / NCTC 13227 / J2315 / CF5610) (Burkholderia cepacia (strain J2315)) protein is 5-methyltetrahydropteroyltriglutamate--homocysteine methyltransferase.